Consider the following 266-residue polypeptide: Segregation and condensation protein A (266 aa).

Belongs to the ScpA family. Component of a cohesin-like complex composed of ScpA, ScpB and the Smc homodimer, in which ScpA and ScpB bind to the head domain of Smc. The presence of the three proteins is required for the association of the complex with DNA.

The protein resides in the cytoplasm. Its function is as follows. Participates in chromosomal partition during cell division. May act via the formation of a condensin-like complex containing Smc and ScpB that pull DNA away from mid-cell into both cell halves. This Coxiella burnetii (strain RSA 493 / Nine Mile phase I) protein is Segregation and condensation protein A.